A 158-amino-acid chain; its full sequence is Ribosome maturation factor RimP (158 aa).

It belongs to the RimP family.

It is found in the cytoplasm. In terms of biological role, required for maturation of 30S ribosomal subunits. This chain is Ribosome maturation factor RimP, found in Pseudomonas fluorescens (strain Pf0-1).